The primary structure comprises 420 residues: CinA-like protein (420 aa).

The protein belongs to the CinA family.

The sequence is that of CinA-like protein from Syntrophus aciditrophicus (strain SB).